The chain runs to 57 residues: Large ribosomal subunit protein uL30 (57 aa).

The protein belongs to the universal ribosomal protein uL30 family. As to quaternary structure, part of the 50S ribosomal subunit.

The chain is Large ribosomal subunit protein uL30 from Clostridium acetobutylicum (strain ATCC 824 / DSM 792 / JCM 1419 / IAM 19013 / LMG 5710 / NBRC 13948 / NRRL B-527 / VKM B-1787 / 2291 / W).